A 148-amino-acid polypeptide reads, in one-letter code: Large ribosomal subunit protein uL15 (148 aa).

Residues 1–30 (MPSRLRKTRKLRGHVSHGHGRIGKHRKHPG) show a composition bias toward basic residues. Residues 1-38 (MPSRLRKTRKLRGHVSHGHGRIGKHRKHPGGRGNAGGL) form a disordered region. Position 39 is a (3S)-3-hydroxyhistidine (H39). N6-acetyllysine occurs at positions 47 and 55. S68 carries the post-translational modification Phosphoserine. An N6-acetyllysine modification is found at K110.

This sequence belongs to the universal ribosomal protein uL15 family. In terms of assembly, component of the large ribosomal subunit. Post-translationally, hydroxylated on His-39 by MINA.

It is found in the cytoplasm. In terms of biological role, component of the large ribosomal subunit. The ribosome is a large ribonucleoprotein complex responsible for the synthesis of proteins in the cell. In Homo sapiens (Human), this protein is Large ribosomal subunit protein uL15 (RPL27A).